A 302-amino-acid chain; its full sequence is Acetylglutamate kinase (302 aa).

Substrate contacts are provided by residues 73-74 (GG), R95, and N200.

This sequence belongs to the acetylglutamate kinase family. ArgB subfamily.

Its subcellular location is the cytoplasm. It carries out the reaction N-acetyl-L-glutamate + ATP = N-acetyl-L-glutamyl 5-phosphate + ADP. It participates in amino-acid biosynthesis; L-arginine biosynthesis; N(2)-acetyl-L-ornithine from L-glutamate: step 2/4. Catalyzes the ATP-dependent phosphorylation of N-acetyl-L-glutamate. In Sphingopyxis alaskensis (strain DSM 13593 / LMG 18877 / RB2256) (Sphingomonas alaskensis), this protein is Acetylglutamate kinase.